Reading from the N-terminus, the 781-residue chain is Death domain-containing protein 1 (781 aa).

ZU5 domains follow at residues 167–301 and 302–483; these read IMEK…VSCL and KKES…VLHL. A Death domain is found at 679-764; it reads DNLLHWLAEE…DLAEELKFKW (86 aa).

This chain is Death domain-containing protein 1 (DTHD1), found in Homo sapiens (Human).